The primary structure comprises 448 residues: Methionine aminopeptidase 2-1 (448 aa).

The interval 1–90 is disordered; it reads MAAQASEKLE…PPRVPVSSLF (90 aa). The segment covering 22–33 has biased composition (low complexity); that stretch reads AAGPAKAGQADA. Residues 34 to 46 show a composition bias toward acidic residues; sequence GEVEDESDDDADD. Residues 47–58 are compositionally biased toward low complexity; that stretch reads AGAAADGAANGA. Over residues 59 to 74 the composition is skewed to basic residues; it reads AKKKKKRKSKKKKKGG. Residues 75–88 are compositionally biased toward low complexity; it reads AKVQSSPPRVPVSS. Substrate is bound at residue H198. Residues D218, D229, and H301 each coordinate a divalent metal cation. Residue H309 participates in substrate binding. 2 residues coordinate a divalent metal cation: E334 and E429.

It belongs to the peptidase M24A family. Methionine aminopeptidase eukaryotic type 2 subfamily. The cofactor is Co(2+). Zn(2+) is required as a cofactor. It depends on Mn(2+) as a cofactor. Requires Fe(2+) as cofactor.

The protein localises to the cytoplasm. It catalyses the reaction Release of N-terminal amino acids, preferentially methionine, from peptides and arylamides.. In terms of biological role, cotranslationally removes the N-terminal methionine from nascent proteins. The N-terminal methionine is often cleaved when the second residue in the primary sequence is small and uncharged (Met-Ala-, Cys, Gly, Pro, Ser, Thr, or Val). The polypeptide is Methionine aminopeptidase 2-1 (Emericella nidulans (strain FGSC A4 / ATCC 38163 / CBS 112.46 / NRRL 194 / M139) (Aspergillus nidulans)).